The chain runs to 197 residues: Small ribosomal subunit protein uS4 (197 aa).

An S4 RNA-binding domain is found at 88 to 150 (SRLDNLVYRM…AKSLEIILDN (63 aa)).

Belongs to the universal ribosomal protein uS4 family. In terms of assembly, part of the 30S ribosomal subunit. Contacts protein S5. The interaction surface between S4 and S5 is involved in control of translational fidelity.

One of the primary rRNA binding proteins, it binds directly to 16S rRNA where it nucleates assembly of the body of the 30S subunit. Functionally, with S5 and S12 plays an important role in translational accuracy. The polypeptide is Small ribosomal subunit protein uS4 (Azobacteroides pseudotrichonymphae genomovar. CFP2).